The sequence spans 257 residues: Ribonuclease HII (257 aa).

Residues 72–257 (TYIAGIDEVG…FAPIKDMIQK (186 aa)) form the RNase H type-2 domain. A divalent metal cation contacts are provided by aspartate 78, glutamate 79, and aspartate 170.

The protein belongs to the RNase HII family. Mn(2+) is required as a cofactor. Mg(2+) serves as cofactor.

It is found in the cytoplasm. The enzyme catalyses Endonucleolytic cleavage to 5'-phosphomonoester.. Functionally, endonuclease that specifically degrades the RNA of RNA-DNA hybrids. The chain is Ribonuclease HII from Bacillus cereus (strain ATCC 10987 / NRS 248).